The chain runs to 538 residues: Bifunctional purine biosynthesis protein PurH (538 aa).

Positions 8–158 constitute an MGS-like domain; the sequence is IPAPDKVEIK…KNHAYVTILT (151 aa).

The protein belongs to the PurH family.

It catalyses the reaction (6R)-10-formyltetrahydrofolate + 5-amino-1-(5-phospho-beta-D-ribosyl)imidazole-4-carboxamide = 5-formamido-1-(5-phospho-D-ribosyl)imidazole-4-carboxamide + (6S)-5,6,7,8-tetrahydrofolate. The catalysed reaction is IMP + H2O = 5-formamido-1-(5-phospho-D-ribosyl)imidazole-4-carboxamide. It functions in the pathway purine metabolism; IMP biosynthesis via de novo pathway; 5-formamido-1-(5-phospho-D-ribosyl)imidazole-4-carboxamide from 5-amino-1-(5-phospho-D-ribosyl)imidazole-4-carboxamide (10-formyl THF route): step 1/1. Its pathway is purine metabolism; IMP biosynthesis via de novo pathway; IMP from 5-formamido-1-(5-phospho-D-ribosyl)imidazole-4-carboxamide: step 1/1. The protein is Bifunctional purine biosynthesis protein PurH of Rhizobium etli (strain ATCC 51251 / DSM 11541 / JCM 21823 / NBRC 15573 / CFN 42).